The primary structure comprises 233 residues: Large ribosomal subunit protein uL1 (233 aa).

Belongs to the universal ribosomal protein uL1 family. Part of the 50S ribosomal subunit.

Binds directly to 23S rRNA. The L1 stalk is quite mobile in the ribosome, and is involved in E site tRNA release. Functionally, protein L1 is also a translational repressor protein, it controls the translation of the L11 operon by binding to its mRNA. In Paracoccus denitrificans (strain Pd 1222), this protein is Large ribosomal subunit protein uL1.